Reading from the N-terminus, the 323-residue chain is Protoheme IX farnesyltransferase (323 aa).

The next 9 membrane-spanning stretches (helical) occupy residues 28–48, 50–70, 99–119, 122–142, 150–170, 178–198, 223–243, 244–264, and 279–299; these read IIPL…NGQV, PVLL…AQTL, HALI…VVFV, ASAL…THML, IVIG…AVTG, ALFA…ALMI, IWIY…PLAA, SGIV…YKTW, and LFKY…VDSL.

The protein belongs to the UbiA prenyltransferase family. Protoheme IX farnesyltransferase subfamily.

Its subcellular location is the cell inner membrane. It catalyses the reaction heme b + (2E,6E)-farnesyl diphosphate + H2O = Fe(II)-heme o + diphosphate. It participates in porphyrin-containing compound metabolism; heme O biosynthesis; heme O from protoheme: step 1/1. Functionally, converts heme B (protoheme IX) to heme O by substitution of the vinyl group on carbon 2 of heme B porphyrin ring with a hydroxyethyl farnesyl side group. The polypeptide is Protoheme IX farnesyltransferase (Gloeothece citriformis (strain PCC 7424) (Cyanothece sp. (strain PCC 7424))).